The primary structure comprises 290 residues: Shikimate dehydrogenase (NADP(+)) (290 aa).

Shikimate is bound by residues Ser-18–Ser-20 and Thr-66. Lys-70 serves as the catalytic Proton acceptor. Glu-82 lines the NADP(+) pocket. Shikimate contacts are provided by Asn-91 and Asp-106. NADP(+) contacts are provided by residues Gly-130–Ala-134 and Met-229. Tyr-231 serves as a coordination point for shikimate. Gly-252 serves as a coordination point for NADP(+).

Belongs to the shikimate dehydrogenase family. Homodimer.

It catalyses the reaction shikimate + NADP(+) = 3-dehydroshikimate + NADPH + H(+). It functions in the pathway metabolic intermediate biosynthesis; chorismate biosynthesis; chorismate from D-erythrose 4-phosphate and phosphoenolpyruvate: step 4/7. Functionally, involved in the biosynthesis of the chorismate, which leads to the biosynthesis of aromatic amino acids. Catalyzes the reversible NADPH linked reduction of 3-dehydroshikimate (DHSA) to yield shikimate (SA). In Chlorobium phaeovibrioides (strain DSM 265 / 1930) (Prosthecochloris vibrioformis (strain DSM 265)), this protein is Shikimate dehydrogenase (NADP(+)).